We begin with the raw amino-acid sequence, 137 residues long: Fluoride-specific ion channel FluC (137 aa).

4 helical membrane-spanning segments follow: residues 11-31 (IAVS…SLWF), 42-62 (GTLF…ALAL), 75-95 (LIAV…LDTF), and 107-127 (GFYW…GIIL). Na(+)-binding residues include glycine 82 and threonine 85.

It belongs to the fluoride channel Fluc/FEX (TC 1.A.43) family.

It is found in the cell inner membrane. It carries out the reaction fluoride(in) = fluoride(out). Its activity is regulated as follows. Na(+) is not transported, but it plays an essential structural role and its presence is essential for fluoride channel function. In terms of biological role, fluoride-specific ion channel. Important for reducing fluoride concentration in the cell, thus reducing its toxicity. This Trichormus variabilis (strain ATCC 29413 / PCC 7937) (Anabaena variabilis) protein is Fluoride-specific ion channel FluC.